Consider the following 341-residue polypeptide: S-adenosylmethionine:tRNA ribosyltransferase-isomerase (341 aa).

The protein belongs to the QueA family. In terms of assembly, monomer.

The protein localises to the cytoplasm. The catalysed reaction is 7-aminomethyl-7-carbaguanosine(34) in tRNA + S-adenosyl-L-methionine = epoxyqueuosine(34) in tRNA + adenine + L-methionine + 2 H(+). The protein operates within tRNA modification; tRNA-queuosine biosynthesis. Transfers and isomerizes the ribose moiety from AdoMet to the 7-aminomethyl group of 7-deazaguanine (preQ1-tRNA) to give epoxyqueuosine (oQ-tRNA). This is S-adenosylmethionine:tRNA ribosyltransferase-isomerase from Clostridium botulinum (strain Kyoto / Type A2).